The chain runs to 376 residues: Erythronate-4-phosphate dehydrogenase (376 aa).

Ser-45 and Thr-67 together coordinate substrate. Asp-147 provides a ligand contact to NAD(+). Arg-209 is a catalytic residue. Asp-233 lines the NAD(+) pocket. The active site involves Glu-238. His-255 (proton donor) is an active-site residue. Position 258 (Gly-258) interacts with NAD(+). Residue Tyr-259 coordinates substrate.

It belongs to the D-isomer specific 2-hydroxyacid dehydrogenase family. PdxB subfamily. Homodimer.

It is found in the cytoplasm. It catalyses the reaction 4-phospho-D-erythronate + NAD(+) = (R)-3-hydroxy-2-oxo-4-phosphooxybutanoate + NADH + H(+). Its pathway is cofactor biosynthesis; pyridoxine 5'-phosphate biosynthesis; pyridoxine 5'-phosphate from D-erythrose 4-phosphate: step 2/5. Catalyzes the oxidation of erythronate-4-phosphate to 3-hydroxy-2-oxo-4-phosphonooxybutanoate. This chain is Erythronate-4-phosphate dehydrogenase, found in Shewanella sp. (strain ANA-3).